The following is a 359-amino-acid chain: Fe-S cluster assembly protein DRE2 (359 aa).

The segment at 1 to 148 is N-terminal SAM-like domain; it reads MASTGRVLLL…KPDVAAQQAV (148 aa). Disordered regions lie at residues 97 to 116 and 149 to 210; these read NKAW…NDND and PLKL…PSGV. Residues 149–246 are linker; sequence PLKLGRRKKE…EDELLGEDDM (98 aa). The segment covering 152-164 has biased composition (basic residues); the sequence is LGRRKKEKERRHP. Residues 167-183 are compositionally biased toward polar residues; that stretch reads NDVTNGKVNAPSSNGVN. Positions 184-200 are enriched in low complexity; it reads ASTSTATATATTTTTTT. Positions 256, 267, 270, and 272 each coordinate [2Fe-2S] cluster. A fe-S binding site A region spans residues 256 to 272; that stretch reads CRPKPGKRRRACKDCSC. The [4Fe-4S] cluster site is built by Cys-322, Cys-325, Cys-333, and Cys-336. 2 short sequence motifs (cx2C motif) span residues 322–325 and 333–336; these read CGNC and CDGC. The segment at 322-336 is fe-S binding site B; the sequence is CGNCSLGDAFRCDGC.

Belongs to the anamorsin family. In terms of assembly, monomer. Interacts with TAH18. Interacts with MIA40. Requires [2Fe-2S] cluster as cofactor. [4Fe-4S] cluster is required as a cofactor.

It localises to the cytoplasm. It is found in the mitochondrion intermembrane space. Functionally, component of the cytosolic iron-sulfur (Fe-S) protein assembly (CIA) machinery required for the maturation of extramitochondrial Fe-S proteins. Part of an electron transfer chain functioning in an early step of cytosolic Fe-S biogenesis, facilitating the de novo assembly of a [4Fe-4S] cluster on the scaffold complex CFD1-NBP35. Electrons are transferred to DRE2 from NADPH via the FAD- and FMN-containing protein TAH18. TAH18-DRE2 are also required for the assembly of the diferric tyrosyl radical cofactor of ribonucleotide reductase (RNR), probably by providing electrons for reduction during radical cofactor maturation in the catalytic small subunit RNR2. The sequence is that of Fe-S cluster assembly protein DRE2 from Blastomyces gilchristii (strain SLH14081) (Blastomyces dermatitidis).